Here is a 206-residue protein sequence, read N- to C-terminus: Uracil phosphoribosyltransferase (206 aa).

5-phospho-alpha-D-ribose 1-diphosphate is bound by residues arginine 76, arginine 101, and 128 to 136 (DPMLATGTT). Uracil-binding positions include isoleucine 191 and 196 to 198 (GDA). A 5-phospho-alpha-D-ribose 1-diphosphate-binding site is contributed by aspartate 197.

It belongs to the UPRTase family. It depends on Mg(2+) as a cofactor.

The enzyme catalyses UMP + diphosphate = 5-phospho-alpha-D-ribose 1-diphosphate + uracil. It participates in pyrimidine metabolism; UMP biosynthesis via salvage pathway; UMP from uracil: step 1/1. Allosterically activated by GTP. Its function is as follows. Catalyzes the conversion of uracil and 5-phospho-alpha-D-ribose 1-diphosphate (PRPP) to UMP and diphosphate. This chain is Uracil phosphoribosyltransferase, found in Mycoplasma genitalium (strain ATCC 33530 / DSM 19775 / NCTC 10195 / G37) (Mycoplasmoides genitalium).